The chain runs to 208 residues: ATP-dependent Clp protease proteolytic subunit (208 aa).

Catalysis depends on Ser106, which acts as the Nucleophile. His131 is an active-site residue.

This sequence belongs to the peptidase S14 family. In terms of assembly, fourteen ClpP subunits assemble into 2 heptameric rings which stack back to back to give a disk-like structure with a central cavity, resembling the structure of eukaryotic proteasomes.

The protein resides in the cytoplasm. The enzyme catalyses Hydrolysis of proteins to small peptides in the presence of ATP and magnesium. alpha-casein is the usual test substrate. In the absence of ATP, only oligopeptides shorter than five residues are hydrolyzed (such as succinyl-Leu-Tyr-|-NHMec, and Leu-Tyr-Leu-|-Tyr-Trp, in which cleavage of the -Tyr-|-Leu- and -Tyr-|-Trp bonds also occurs).. Its function is as follows. Cleaves peptides in various proteins in a process that requires ATP hydrolysis. Has a chymotrypsin-like activity. Plays a major role in the degradation of misfolded proteins. In Dinoroseobacter shibae (strain DSM 16493 / NCIMB 14021 / DFL 12), this protein is ATP-dependent Clp protease proteolytic subunit.